Consider the following 135-residue polypeptide: M-zodatoxin-Lt8q (135 aa).

The first 20 residues, Met1 to Ser20, serve as a signal peptide directing secretion. The propeptide occupies Lys21–Arg60.

This sequence belongs to the cationic peptide 06 (cytoinsectotoxin) family. Expressed by the venom gland.

It localises to the secreted. In terms of biological role, insecticidal, cytolytic and antimicrobial peptide. Forms voltage-dependent, ion-permeable channels in membranes. At high concentration causes cell membrane lysis. This is M-zodatoxin-Lt8q (cit 1-16) from Lachesana tarabaevi (Spider).